The chain runs to 257 residues: Protein YIPF5 (257 aa).

At 1-124 (MSGFDNLNSG…RASDGSIMNE (124 aa)) the chain is on the cytoplasmic side. The interaction with Sec23 stretch occupies residues 75–106 (PPTPQTFYGDSFEEEPPLLEELGINFDHIWQK). Residues 125–145 (TDLAGPVVFCLAFGATLLLAG) form a helical membrane-spanning segment. Lysine 146 is a topological domain (lumenal). Residues 147–167 (IQFGYVYGISAIGCLGMFCLL) traverse the membrane as a helical segment. Topologically, residues 168 to 173 (NLMSMT) are cytoplasmic. The helical transmembrane segment at 174-194 (GVSFGCVASVLGYCLLPMILL) threads the bilayer. At 195 to 196 (SS) the chain is on the lumenal side. A helical transmembrane segment spans residues 197 to 217 (FAVVFSLQGMVGILLTATIIG). The Cytoplasmic portion of the chain corresponds to 218–236 (WCSFSASKIFISALAMDGQ). Residues 237–257 (QLLVAYPCALLYGVFALISVF) form a helical membrane-spanning segment.

The protein belongs to the YIP1 family. As to quaternary structure, interacts with the COPII coat components Sec23 (SEC23A and/or SEC23B) and Sec24 (SEC24A and/or SEC24B). Interacts with YIF1A. May interact with RAB1A. Interacts with YIPF3 and YIPF4.

It is found in the endoplasmic reticulum membrane. The protein localises to the golgi apparatus. It localises to the cis-Golgi network membrane. The protein resides in the cytoplasmic vesicle. Its subcellular location is the COPII-coated vesicle. In terms of biological role, plays a role in transport between endoplasmic reticulum and Golgi. In pancreatic beta cells, required to transport proinsulin from endoplasmic reticulum into the Golgi. This Rattus norvegicus (Rat) protein is Protein YIPF5.